Reading from the N-terminus, the 231-residue chain is MKLGKKYKESTKLIDRKTLYTPLEAMELALKTAKANFDETIELSIKLGVDPRHADQQVRGAVVLPHGTGKKVRVLVLAKGDRIKEAEDAGADYVGAEEYVEKIQKENWFDFDVVVATPDMMGVVGRLGRILGPKGLMPNPKSGTVTFDVAKAIQEIKAGKVEYRVDKTSIVHVPIGKKSFEVQKLLDNFRVLMEAIIKAKPSAAKGQYLKSVAVSSTMGPGIKINSVKVLE.

Belongs to the universal ribosomal protein uL1 family. Part of the 50S ribosomal subunit.

In terms of biological role, binds directly to 23S rRNA. The L1 stalk is quite mobile in the ribosome, and is involved in E site tRNA release. Its function is as follows. Protein L1 is also a translational repressor protein, it controls the translation of the L11 operon by binding to its mRNA. The protein is Large ribosomal subunit protein uL1 of Clostridium kluyveri (strain NBRC 12016).